The primary structure comprises 526 residues: MDVRFYPPPAQPAAAPAAPCLGPSPCLDPYYCNKFDGENMYMSMTEPSQDYVPASQSYPGPSLESEDFNIPPITPPSLPDHSLVHLNEVESGYHSLCHPMNHNGLLPFHPQTMDLPEITVSNMLGQDGALLSNSISVMQEIGNAEGAQYSSHPQMAAMRPRGQPTDIRQQASMMQPGQLTTINQSQLSAQLGLNMGGTNVAHNSPSPPGSKSATPSPSSSVHEDECEDASKINGGEKRPASDMGKKPKTPKKKKKKDPNEPQKPVSAYALFFRDTQAAIKGQNPNATFGEVSKIVASMWDGLGEEQKQVYKKKTEAAKKEYLKQLAAYRASLVSKSYTDPVDVKTSQPPQLVNSKPSVFHGPSQAHSALYLSSHYHQQPGMTPQLTAMHPSLPRNIAPKPNNQMPVTVSIANMAVSPPPPLQISPPLHQHLSMQQHQSLAMQQPLGSQLPMQVQTALHSPTMQQGFTLQPDYQTIINPTSTAAQVVTQAMEYVRSGCRNPPPQPVDWSTDYCSSGGMQRDKALYLT.

The span at 194–203 (NMGGTNVAHN) shows a compositional bias: polar residues. Residues 194 to 264 (NMGGTNVAHN…KKDPNEPQKP (71 aa)) form a disordered region. The span at 209 to 220 (GSKSATPSPSSS) shows a compositional bias: low complexity. The span at 228-245 (DASKINGGEKRPASDMGK) shows a compositional bias: basic and acidic residues. A Nuclear localization signal motif is present at residues 237 to 256 (KRPASDMGKKPKTPKKKKKK). Positions 246 to 256 (KPKTPKKKKKK) are enriched in basic residues. The segment at residues 261–329 (PQKPVSAYAL…EYLKQLAAYR (69 aa)) is a DNA-binding region (HMG box).

Belongs to the high motility group (HMG) box superfamily. As to quaternary structure, interacts with HBO1 complex composed at least of KAT7/HBO1, ING4, MEAF6, and JADE2; this complex is involved in histone acetylation. Interacts with DNMT1, LEO1, PAF1, SAP130 and SIN3A; these interactors regulate chromatin remodeling. Interacts with an array of proteins involved in RNA processing and translation and DNA replication. As to expression, expressed in neurons of the subventricular zone (at protein level). Expressed in distinct subpopulations of thymocytes undergoing positive selection: double CD4-positive CD8-positive (DP) cells, CD4-positive CD8-low transitional cells and in single CD4-positive and CD8-positive cells (at protein level). Expressed in ILC progenitors and mature ILC subsets: ILC1, ILC2 and ILC3 (at protein level). Expressed in lymphoid tissue-inducer cells and bone marrow NK cell subsets. Abundant in thymus, liver and brain. Also detected in small intestine, spleen, stomach and testis. Highly expressed in tumor-infiltrating CD8-positive T cells (at protein level).

It localises to the nucleus. Its function is as follows. Transcriptional regulator with a major role in neural stem cell commitment and corticogenesis as well as in lymphoid cell development and lymphoid tissue organogenesis. Binds to GC-rich DNA sequences in the proximity of transcription start sites and may alter chromatin structure, modifying access of transcription factors to DNA. During cortical development, controls the neural stem cell pool by inhibiting the switch from proliferative to differentiating progenitors. Beyond progenitor cells, promotes neurite outgrowth in newborn neurons migrating to reach the cortical plate. May activate or repress critical genes for neural stem cell fate such as SOX2, EOMES and ROBO2. Plays an essential role in the development of lymphoid tissue-inducer (LTi) cells, a subset necessary for the formation of secondary lymphoid organs: peripheral lymph nodes and Peyer's patches. Acts as a developmental checkpoint and regulates thymocyte positive selection toward T cell lineage commitment. Required for the development of various T cell subsets, including CD4-positive helper T cells, CD8-positive cytotoxic T cells, regulatory T cells and CD1D-dependent natural killer T (NKT) cells. Required for the differentiation of common lymphoid progenitors (CMP) to innate lymphoid cells (ILC). May regulate the NOTCH-mediated gene program, promoting differentiation of the ILC lineage. Required at the progenitor phase of NK cell development in the bone marrow to specify NK cell lineage commitment. Upon chronic antigen stimulation, diverts T cell development by promoting the generation of exhaustive T cells, while suppressing effector and memory T cell programming. May regulate the expression of genes encoding inhibitory receptors such as PDCD1 and induce the exhaustion program, to prevent the overstimulation of T cells and activation-induced cell death. This is Thymocyte selection-associated high mobility group box protein TOX from Mus musculus (Mouse).